Reading from the N-terminus, the 328-residue chain is 3-ketodihydrosphingosine reductase TSC10 (328 aa).

Residue Leu16 participates in NADP(+) binding. The NADPH site is built by Gly19, Ser21, and Gly23. A GXSXG motif is present at residues 19-23 (GASQG). Residue Leu24 participates in NADP(+) binding. Residues Arg44, Lys48, and Asp73 each coordinate NADPH. Asp73 provides a ligand contact to NADP(+). Ser161 acts as the Proton donor in catalysis. The NADP(+) site is built by Tyr175, Lys179, and Ser210. Tyr175 serves as the catalytic Proton acceptor. Lys179 (lowers pKa of active site Tyr) is an active-site residue. A helical transmembrane segment spans residues 277–297 (FFQVIVSFIFSIIAPIANYVV).

It belongs to the short-chain dehydrogenases/reductases (SDR) family.

Its subcellular location is the endoplasmic reticulum membrane. It catalyses the reaction sphinganine + NADP(+) = 3-oxosphinganine + NADPH + H(+). It participates in lipid metabolism; sphingolipid metabolism. Functionally, catalyzes the reduction of 3'-oxosphinganine (3-ketodihydrosphingosine/KDS) to sphinganine (dihydrosphingosine/DHS), the second step of de novo sphingolipid biosynthesis. The protein is 3-ketodihydrosphingosine reductase TSC10 (TSC10) of Debaryomyces hansenii (strain ATCC 36239 / CBS 767 / BCRC 21394 / JCM 1990 / NBRC 0083 / IGC 2968) (Yeast).